Consider the following 94-residue polypeptide: Small ribosomal subunit protein bS20 (94 aa).

This sequence belongs to the bacterial ribosomal protein bS20 family.

Binds directly to 16S ribosomal RNA. The protein is Small ribosomal subunit protein bS20 of Symbiobacterium thermophilum (strain DSM 24528 / JCM 14929 / IAM 14863 / T).